Reading from the N-terminus, the 248-residue chain is 4-hydroxy-tetrahydrodipicolinate reductase (248 aa).

NAD(+) contacts are provided by residues 9–14 (GAKGRV), 77–79 (GTT), and 104–107 (APNF). H134 serves as the catalytic Proton donor/acceptor. H135 contributes to the (S)-2,3,4,5-tetrahydrodipicolinate binding site. The Proton donor role is filled by K138. A (S)-2,3,4,5-tetrahydrodipicolinate-binding site is contributed by 144–145 (GT).

Belongs to the DapB family.

It localises to the cytoplasm. The enzyme catalyses (S)-2,3,4,5-tetrahydrodipicolinate + NAD(+) + H2O = (2S,4S)-4-hydroxy-2,3,4,5-tetrahydrodipicolinate + NADH + H(+). It catalyses the reaction (S)-2,3,4,5-tetrahydrodipicolinate + NADP(+) + H2O = (2S,4S)-4-hydroxy-2,3,4,5-tetrahydrodipicolinate + NADPH + H(+). It participates in amino-acid biosynthesis; L-lysine biosynthesis via DAP pathway; (S)-tetrahydrodipicolinate from L-aspartate: step 4/4. Functionally, catalyzes the conversion of 4-hydroxy-tetrahydrodipicolinate (HTPA) to tetrahydrodipicolinate. The sequence is that of 4-hydroxy-tetrahydrodipicolinate reductase from Corynebacterium aurimucosum (strain ATCC 700975 / DSM 44827 / CIP 107346 / CN-1) (Corynebacterium nigricans).